Consider the following 155-residue polypeptide: Small ribosomal subunit protein uS7 (155 aa).

This sequence belongs to the universal ribosomal protein uS7 family. Part of the 30S ribosomal subunit. Contacts proteins S9 and S11.

One of the primary rRNA binding proteins, it binds directly to 16S rRNA where it nucleates assembly of the head domain of the 30S subunit. Is located at the subunit interface close to the decoding center, probably blocks exit of the E-site tRNA. This Malacoplasma penetrans (strain HF-2) (Mycoplasma penetrans) protein is Small ribosomal subunit protein uS7.